The sequence spans 90 residues: Defensin-like protein 293 (90 aa).

Residues Met1–Ala26 form the signal peptide. 3 cysteine pairs are disulfide-bonded: Cys63–Cys83, Cys69–Cys88, and Cys75–Cys90.

Belongs to the DEFL family.

The protein resides in the secreted. This chain is Defensin-like protein 293, found in Arabidopsis thaliana (Mouse-ear cress).